Reading from the N-terminus, the 344-residue chain is MVLGLAQYGVIDLHLHLDGSLSPAWMIEWAKKQAVNLPASTAEALTAYVSVPQDCSDLNEYLRCFDLPLSLLQTPEALSSAVTDLIQRLDQDGLVYAEIRFAPQLHTQRSMSQEDAVKAALRGLQAGLASTSLFKANLILCCMRAADNRSANLETICLAKQYLTKYEAGVVAIDLAGAEGLFATQHFQQEFDFANQRGVPFTIHAGEAAGPESVQQALDFGATRIGHGIRAIESETVMKQLIDKRTPLEMCPCSNLQTKTVAQLADYPLRTFLMRGVVATLNTDNMTVSQTCIQQEYRLLAEQYQLSISEAKQLLLNSIAAAFLSNEDKKALLAHIQQRYPQLI.

2 residues coordinate Zn(2+): His14 and His16. Residues His16, Asp18, and Gly177 each coordinate substrate. His204 provides a ligand contact to Zn(2+). The Proton donor role is filled by Glu207. Asp284 is a binding site for Zn(2+).

It belongs to the metallo-dependent hydrolases superfamily. Adenosine and AMP deaminases family. Adenosine deaminase subfamily. Requires Zn(2+) as cofactor.

It catalyses the reaction adenosine + H2O + H(+) = inosine + NH4(+). The enzyme catalyses 2'-deoxyadenosine + H2O + H(+) = 2'-deoxyinosine + NH4(+). Functionally, catalyzes the hydrolytic deamination of adenosine and 2-deoxyadenosine. In Haemophilus ducreyi (strain 35000HP / ATCC 700724), this protein is Adenosine deaminase.